Consider the following 249-residue polypeptide: MATLRVLPEAQAKVDVFREDLCTKTENLLGSYFPKKISELDAFLKEPDLNEANLSNLKAPLDIPVPDPVKEKEKEERRKQQEKEDKDEKKKGEDEDKGPPCGPVGCNEKIVVLLQRVKPEIKDVIEKLNLVTTWLQLQIPRIEDGNNFGVAVQEKVFELMTALHTKLEGFHTQISKYFSERGDAVTKAAKQPHVGDYRQLVHELDEAEYRDIRLMVMEIRNAYAVLYDIILKNFEKLKKPRGETKGMIY.

The interval 55 to 102 is disordered; sequence SNLKAPLDIPVPDPVKEKEKEERRKQQEKEDKDEKKKGEDEDKGPPCG. The segment covering 68-98 has biased composition (basic and acidic residues); it reads PVKEKEKEERRKQQEKEDKDEKKKGEDEDKG.

The protein belongs to the PA28 family. Heterodimer of PSME1 and PSME2, which forms a hexameric ring. PSME1 can form homoheptamers.

Functionally, implicated in immunoproteasome assembly and required for efficient antigen processing. The PA28 activator complex enhances the generation of class I binding peptides by altering the cleavage pattern of the proteasome. The chain is Proteasome activator complex subunit 1 (PSME1) from Bos taurus (Bovine).